Here is a 577-residue protein sequence, read N- to C-terminus: Cytidine monophosphate-N-acetylneuraminic acid hydroxylase (577 aa).

The propeptide occupies M1 to R4. The Rieske domain maps to L14–S112. [2Fe-2S] cluster is bound by residues C54, H56, C75, and H78.

It belongs to the CMP-Neu5Ac hydroxylase family. Requires [2Fe-2S] cluster as cofactor. Expressed in all tissues tested, except in brain.

It localises to the cytoplasm. It is found in the endoplasmic reticulum. The catalysed reaction is CMP-N-acetyl-beta-neuraminate + 2 Fe(II)-[cytochrome b5] + O2 + 2 H(+) = CMP-N-glycoloyl-beta-neuraminate + 2 Fe(III)-[cytochrome b5] + H2O. It participates in amino-sugar metabolism; N-acetylneuraminate metabolism. Functionally, sialic acids are components of carbohydrate chains of glycoconjugates and are involved in cell-cell recognition and cell-pathogen interactions. Catalyzes the conversion of CMP-N-acetylneuraminic acid (CMP-Neu5Ac) into its hydroxylated derivative CMP-N-glycolylneuraminic acid (CMP-Neu5Gc), a sialic acid abundantly expressed at the surface of many cells. The protein is Cytidine monophosphate-N-acetylneuraminic acid hydroxylase (Cmah) of Mus musculus (Mouse).